Here is a 336-residue protein sequence, read N- to C-terminus: Heme A synthase (336 aa).

Transmembrane regions (helical) follow at residues 5–25 (LTRW…VGGI), 92–112 (GRAT…KGII), 117–137 (ILSY…GWYM), 153–173 (LAFH…KLVK), and 191–211 (LIFS…GALV). Residue histidine 255 coordinates heme. Helical transmembrane passes span 257–277 (LGAY…LKVK), 284–304 (VAFY…ITLL), and 307–327 (VPII…SVVI). Residue histidine 315 coordinates heme.

The protein belongs to the COX15/CtaA family. Type 2 subfamily. In terms of assembly, interacts with CtaB. Requires heme b as cofactor.

It localises to the cell membrane. The enzyme catalyses Fe(II)-heme o + 2 A + H2O = Fe(II)-heme a + 2 AH2. It functions in the pathway porphyrin-containing compound metabolism; heme A biosynthesis; heme A from heme O: step 1/1. Catalyzes the conversion of heme O to heme A by two successive hydroxylations of the methyl group at C8. The first hydroxylation forms heme I, the second hydroxylation results in an unstable dihydroxymethyl group, which spontaneously dehydrates, resulting in the formyl group of heme A. This chain is Heme A synthase, found in Rickettsia bellii (strain OSU 85-389).